The primary structure comprises 224 residues: Redox-sensing transcriptional repressor Rex (224 aa).

A DNA-binding region (H-T-H motif) is located at residues arginine 17 to phenylalanine 56. An NAD(+)-binding site is contributed by glycine 91–glycine 96.

Belongs to the transcriptional regulatory Rex family. Homodimer.

The protein resides in the cytoplasm. Its function is as follows. Modulates transcription in response to changes in cellular NADH/NAD(+) redox state. The protein is Redox-sensing transcriptional repressor Rex of Thermoanaerobacter sp. (strain X514).